A 297-amino-acid chain; its full sequence is HTH-type transcriptional regulator ArgP (297 aa).

The HTH lysR-type domain occupies proline 4–threonine 60. Residues phenylalanine 21–lysine 40 constitute a DNA-binding region (H-T-H motif).

Belongs to the LysR transcriptional regulatory family. In terms of assembly, homodimer.

In terms of biological role, controls the transcription of genes involved in arginine and lysine metabolism. In Enterobacter sp. (strain 638), this protein is HTH-type transcriptional regulator ArgP.